The primary structure comprises 63 residues: Juvenile hormone esterase, isoform B (63 aa).

N-linked (GlcNAc...) asparagine glycosylation occurs at Asn20.

Belongs to the type-B carboxylesterase/lipase family. In terms of tissue distribution, fat body, the site of their biosynthesis, and the hemolymph where it is secreted.

It catalyses the reaction juvenile hormone I + H2O = juvenile hormone I carboxylate + methanol + H(+). It carries out the reaction juvenile hormone III + H2O = juvenile hormone III carboxylate + methanol + H(+). Its function is as follows. JH esterase plays a crucial role in the decrease of JH activity in lepidopteran insects, by hydrolyzing the methyl ester of JH. It is also involved in the transport of JH. This chain is Juvenile hormone esterase, isoform B, found in Trichoplusia ni (Cabbage looper).